We begin with the raw amino-acid sequence, 547 residues long: Phosphomethylpyrimidine synthase (547 aa).

Substrate contacts are provided by residues N150, M179, Y208, H244, 264–266 (SRG), 305–308 (DGLR), and E344. H348 serves as a coordination point for Zn(2+). Substrate is bound at residue Y371. H412 contributes to the Zn(2+) binding site. Residues C492, C495, and C500 each contribute to the [4Fe-4S] cluster site.

Belongs to the ThiC family. [4Fe-4S] cluster serves as cofactor.

It catalyses the reaction 5-amino-1-(5-phospho-beta-D-ribosyl)imidazole + S-adenosyl-L-methionine = 4-amino-2-methyl-5-(phosphooxymethyl)pyrimidine + CO + 5'-deoxyadenosine + formate + L-methionine + 3 H(+). Its pathway is cofactor biosynthesis; thiamine diphosphate biosynthesis. Its function is as follows. Catalyzes the synthesis of the hydroxymethylpyrimidine phosphate (HMP-P) moiety of thiamine from aminoimidazole ribotide (AIR) in a radical S-adenosyl-L-methionine (SAM)-dependent reaction. This Nocardia farcinica (strain IFM 10152) protein is Phosphomethylpyrimidine synthase.